A 179-amino-acid chain; its full sequence is ATP synthase subunit delta (179 aa).

The protein belongs to the ATPase delta chain family. F-type ATPases have 2 components, F(1) - the catalytic core - and F(0) - the membrane proton channel. F(1) has five subunits: alpha(3), beta(3), gamma(1), delta(1), epsilon(1). F(0) has three main subunits: a(1), b(2) and c(10-14). The alpha and beta chains form an alternating ring which encloses part of the gamma chain. F(1) is attached to F(0) by a central stalk formed by the gamma and epsilon chains, while a peripheral stalk is formed by the delta and b chains.

It is found in the cell membrane. F(1)F(0) ATP synthase produces ATP from ADP in the presence of a proton or sodium gradient. F-type ATPases consist of two structural domains, F(1) containing the extramembraneous catalytic core and F(0) containing the membrane proton channel, linked together by a central stalk and a peripheral stalk. During catalysis, ATP synthesis in the catalytic domain of F(1) is coupled via a rotary mechanism of the central stalk subunits to proton translocation. Its function is as follows. This protein is part of the stalk that links CF(0) to CF(1). It either transmits conformational changes from CF(0) to CF(1) or is implicated in proton conduction. The chain is ATP synthase subunit delta from Ureaplasma parvum serovar 3 (strain ATCC 27815 / 27 / NCTC 11736).